Consider the following 553-residue polypeptide: Keratin, type II cytoskeletal 73 (553 aa).

Positions 1-130 (MNRQFTCKSG…DPEIQKVRAQ (130 aa)) are head. The coil 1A stretch occupies residues 131-166 (EREQIKALNNKFASFIDKVRFLEQQNQVLQTKWELL). In terms of domain architecture, IF rod spans 131–444 (EREQIKALNN…KLLEGEECRM (314 aa)). Residues 167–185 (QQLDLSNCRRNLEPVYEAH) are linker 1. The segment at 186–277 (ISSLQKQLDS…CLYEGEITQM (92 aa)) is coil 1B. The interval 278–301 (QSHISDTSVVLSMDNNRNLDLDSI) is linker 12. The segment at 302 to 440 (IAEVRAQYED…ATYRKLLEGE (139 aa)) is coil 2. The tail stretch occupies residues 441–539 (ECRMSGEHTN…LGSPSKKTMR (99 aa)).

It belongs to the intermediate filament family. As to quaternary structure, heterotetramer of two type I and two type II keratins.

In terms of biological role, has a role in hair formation. Specific component of keratin intermediate filaments in the inner root sheath (IRS) of the hair follicle. The protein is Keratin, type II cytoskeletal 73 (Krt73) of Rattus norvegicus (Rat).